A 96-amino-acid chain; its full sequence is 5-hydroxytryptamine receptor 2B (96 aa).

The Extracellular segment spans residues 1–8; that stretch reads CNQSTLQM. N-linked (GlcNAc...) asparagine glycosylation occurs at Asn2. A helical transmembrane segment spans residues 9-30; it reads LLEIFVWIGYVSSGVNPLVYTL. The NPxxY motif; important for ligand-induced conformation changes and signaling signature appears at 24–28; that stretch reads NPLVY. At 31-96 the chain is on the cytoplasmic side; the sequence is FNKTFRDAFG…STMYQSPVRL (66 aa). Residue Cys45 is the site of S-palmitoyl cysteine attachment.

It belongs to the G-protein coupled receptor 1 family. As to quaternary structure, interacts (via C-terminus) with MPDZ.

The protein resides in the cell membrane. It localises to the synapse. Its subcellular location is the synaptosome. Its function is as follows. G-protein coupled receptor for 5-hydroxytryptamine (serotonin). Also functions as a receptor for various ergot alkaloid derivatives and psychoactive substances. Ligand binding causes a conformation change that triggers signaling via guanine nucleotide-binding proteins (G proteins) and modulates the activity of downstream effectors. HTR2B is coupled to G(q)/G(11) G alpha proteins and activates phospholipase C-beta, releasing diacylglycerol (DAG) and inositol 1,4,5-trisphosphate (IP3) second messengers that modulate the activity of phosphatidylinositol 3-kinase and promote the release of Ca(2+) ions from intracellular stores, respectively. Beta-arrestin family members inhibit signaling via G proteins and mediate activation of alternative signaling pathways. Plays a role in the regulation of dopamine and 5-hydroxytryptamine release, 5-hydroxytryptamine uptake and in the regulation of extracellular dopamine and 5-hydroxytryptamine levels, and thereby affects neural activity. May play a role in the perception of pain. Plays a role in the regulation of behavior, including impulsive behavior. Required for normal proliferation of embryonic cardiac myocytes and normal heart development. Protects cardiomyocytes against apoptosis. Plays a role in the adaptation of pulmonary arteries to chronic hypoxia. Plays a role in vasoconstriction. Required for normal osteoblast function and proliferation, and for maintaining normal bone density. Required for normal proliferation of the interstitial cells of Cajal in the intestine. The polypeptide is 5-hydroxytryptamine receptor 2B (HTR2B) (Cavia porcellus (Guinea pig)).